The primary structure comprises 119 residues: Non-structural protein 3b (119 aa).

The DRBM domain occupies 3 to 79 (YVSLLNQVWQ…AARKVCLRLQ (77 aa)).

In terms of assembly, interacts with host RUNX1 isoform b.

Its subcellular location is the host nucleus. It is found in the host nucleolus. The protein localises to the host mitochondrion. Induces host cell G0/G1 arrest and apoptosis. The polypeptide is Non-structural protein 3b (Pipistrellus abramus (Japanese pipistrelle)).